The following is a 282-amino-acid chain: MKTFLILALLAIVATTATSAVRVPVPQLQPQNPSQQQPQEQVPLMQQQQQFPGQQEQFPPQQPYPHQQPFPSQQPYPQPQPFPPQLPYPQTQPFPPQQPYPQPQPQYPQPQQPISQQQAQQQQQQQQTLQQILQQQLIPCRDVVLQQHNIAHASSQVLQQSSYQQLQQLCCQQLFQIPEQSRCQAIHNVVHAIILHHHQQQQQQPSSQVSYQQPQEQYPSGQVSFQSSQQNPQAQGSVQPQQLPQFQEIRNLALQTLPAMCNVYIPPYCSTTIAPFGIFGTN.

Residues 1–20 (MKTFLILALLAIVATTATSA) form the signal peptide. Residues 27–59 (QLQPQNPSQQQPQEQVPLMQQQQQFPGQQEQFP) show a composition bias toward low complexity. Disordered stretches follow at residues 27–122 (QLQP…AQQQ) and 220–240 (SGQV…SVQP). The span at 60-111 (PQQPYPHQQPFPSQQPYPQPQPFPPQLPYPQTQPFPPQQPYPQPQPQYPQPQ) shows a compositional bias: pro residues. The span at 112 to 122 (QPISQQQAQQQ) shows a compositional bias: low complexity. Over residues 224–240 (SFQSSQQNPQAQGSVQP) the composition is skewed to polar residues.

It belongs to the gliadin/glutenin family. In terms of processing, substrate of transglutaminase.

Gliadin is the major seed storage protein in wheat. This chain is Alpha/beta-gliadin A-III, found in Triticum aestivum (Wheat).